A 213-amino-acid chain; its full sequence is GTP cyclohydrolase 1 (213 aa).

Residues C104, H107, and C175 each coordinate Zn(2+).

The protein belongs to the GTP cyclohydrolase I family. As to quaternary structure, toroid-shaped homodecamer, composed of two pentamers of five dimers.

The catalysed reaction is GTP + H2O = 7,8-dihydroneopterin 3'-triphosphate + formate + H(+). It participates in cofactor biosynthesis; 7,8-dihydroneopterin triphosphate biosynthesis; 7,8-dihydroneopterin triphosphate from GTP: step 1/1. The protein is GTP cyclohydrolase 1 of Brucella anthropi (strain ATCC 49188 / DSM 6882 / CCUG 24695 / JCM 21032 / LMG 3331 / NBRC 15819 / NCTC 12168 / Alc 37) (Ochrobactrum anthropi).